The following is a 321-amino-acid chain: Manganese-dependent ADP-ribose/CDP-alcohol diphosphatase (321 aa).

Residues aspartate 25, glutamine 27, aspartate 72, asparagine 107, histidine 226, histidine 263, and histidine 265 each coordinate Zn(2+).

It belongs to the ADPRibase-Mn family. As to quaternary structure, monomer. Requires Mg(2+) as cofactor.

It carries out the reaction CDP-choline + H2O = phosphocholine + CMP + 2 H(+). The catalysed reaction is ADP-D-ribose + H2O = D-ribose 5-phosphate + AMP + 2 H(+). The enzyme catalyses CDP-glycerol + H2O = sn-glycerol 3-phosphate + CMP + 2 H(+). Its function is as follows. Hydrolyzes ADP-ribose, IDP-ribose, CDP-glycerol, CDP-choline and CDP-ethanolamine, but not other non-reducing ADP-sugars or CDP-glucose. The sequence is that of Manganese-dependent ADP-ribose/CDP-alcohol diphosphatase from Oryza sativa subsp. japonica (Rice).